The sequence spans 696 residues: Two-component response regulator ORR22 (696 aa).

The Response regulatory domain occupies 27 to 142 (RVLAVDDDPV…ELRNIWQHVV (116 aa)). The residue at position 78 (aspartate 78) is a 4-aspartylphosphate. Residues 154 to 214 (LDFSKECNKP…DYQENDEPSA (61 aa)) are disordered. The segment covering 176–185 (TCGSSDQNGR) has biased composition (polar residues). Over residues 195–211 (GEDDDEGDDNDYQENDE) the composition is skewed to acidic residues. The segment at residues 214–273 (AAKKPRVVWSVELHRKFVAAVNQLGIDKAVPKRILELMNVEKLTRENVASHLQKYRLYLK) is a DNA-binding region (myb-like GARP).

It belongs to the ARR family. Type-B subfamily. Two-component system major event consists of a His-to-Asp phosphorelay between a sensor histidine kinase (HK) and a response regulator (RR). In plants, the His-to-Asp phosphorelay involves an additional intermediate named Histidine-containing phosphotransfer protein (HPt). This multistep phosphorelay consists of a His-Asp-His-Asp sequential transfer of a phosphate group between first a His and an Asp of the HK protein, followed by the transfer to a conserved His of the HPt protein and finally the transfer to an Asp in the receiver domain of the RR protein.

It is found in the nucleus. Functionally, transcriptional activator that binds specific DNA sequence. Functions as a response regulator involved in His-to-Asp phosphorelay signal transduction system. Phosphorylation of the Asp residue in the receiver domain activates the ability of the protein to promote the transcription of target genes. May directly activate some type-A response regulators in response to cytokinins. In Oryza sativa subsp. indica (Rice), this protein is Two-component response regulator ORR22.